Reading from the N-terminus, the 270-residue chain is Phthiotriol/phenolphthiotriol dimycocerosates methyltransferase (270 aa).

It belongs to the methyltransferase superfamily. Phthiotriol/phenolphthiotriol dimycocerosates methyltransferase family.

Its function is as follows. Catalyzes the methylation of the lipid moiety of the intermediate compounds phthiotriol and glycosylated phenolphthiotriol dimycoserosates to form phthiocerol dimycocerosates (DIM A) and glycosylated phenolphthiocerol dimycocerosates (PGL). This chain is Phthiotriol/phenolphthiotriol dimycocerosates methyltransferase, found in Mycobacterium bovis (strain ATCC BAA-935 / AF2122/97).